The primary structure comprises 354 residues: MLYFLYKILNINILNYITVRAGIAFFAAFFLTAFFMPRFIAWAKNKHANQPIYELAPQSHKAKNKTPTMGGIVFITATLLSSLLCSNLTNTFVIGGILCLFGFSFIGFKDDYGKIAGHSNHAGMSPRKKFMYQIGLSFALSIILFLFANLSGEFFIPFYKYALFNLQFFAIFFWMLVITASSNSVNLTDGLDGLASIPSIFALVSLGIFVYLCGHSVFSAYLFLPKVVGVGELCVVIFALIGAILGFLWYNCYPAQVFMGDSGSLSVGAFIGYTGVVSKNEILLIIIGFVFVIETLSVILQVGSFKIRKKRIFLMAPIHHHFELKGWNENKIIVRFWIIALIANIIALTTLKLR.

Transmembrane regions (helical) follow at residues 23-43, 66-86, 88-108, 138-158, 161-181, 193-213, 227-247, 257-277, 282-302, and 331-351; these read IAFF…IAWA, TPTM…LLCS, LTNT…FIGF, FALS…FIPF, YALF…ITAS, GLAS…VYLC, VVGV…ILGF, VFMG…TGVV, ILLI…ILQV, and KIIV…LTTL.

Belongs to the glycosyltransferase 4 family. MraY subfamily. The cofactor is Mg(2+).

The protein resides in the cell inner membrane. It carries out the reaction UDP-N-acetyl-alpha-D-muramoyl-L-alanyl-gamma-D-glutamyl-meso-2,6-diaminopimeloyl-D-alanyl-D-alanine + di-trans,octa-cis-undecaprenyl phosphate = di-trans,octa-cis-undecaprenyl diphospho-N-acetyl-alpha-D-muramoyl-L-alanyl-D-glutamyl-meso-2,6-diaminopimeloyl-D-alanyl-D-alanine + UMP. The protein operates within cell wall biogenesis; peptidoglycan biosynthesis. Functionally, catalyzes the initial step of the lipid cycle reactions in the biosynthesis of the cell wall peptidoglycan: transfers peptidoglycan precursor phospho-MurNAc-pentapeptide from UDP-MurNAc-pentapeptide onto the lipid carrier undecaprenyl phosphate, yielding undecaprenyl-pyrophosphoryl-MurNAc-pentapeptide, known as lipid I. In Campylobacter hominis (strain ATCC BAA-381 / DSM 21671 / CCUG 45161 / LMG 19568 / NCTC 13146 / CH001A), this protein is Phospho-N-acetylmuramoyl-pentapeptide-transferase.